Here is a 514-residue protein sequence, read N- to C-terminus: MSVSKKPMVLVILDGYGYREDSQDNAIFNAKTPVMDALWAQRPHTLIDASGLEVGLPDRQMGNSEVGHVNLGAGRIVYQDLTRLDVEIKERTFFSNPTLTGAVDKAVSAGKAVHIMGLLSAGGVHSHEDHILAMVEMAAERGAEKIYLHAFLDGRDTPPRSAKSSLQTFEDKFAELGKGRVASIIGRYYAMDRDNRWDRVEQAYDLMTMAKGEFQFDTAVAGLEAAYARDENDEFVKATVIRAEGQADAAMEDGDALIFMNFRADRAREITRAFVNADFDGFARKKVVNLNFIMLTEYAADIKVPCAYPPASLANTLGEWMAKHDKTQLRISETEKYAHVTFFFNGGVEEPFKGEDRILINSPKVATYDLQPEMSSAELTEKLVAAITSGKYDTIICNYPNGDMVGHTGVMEAAVKAVETLDHCVEQVAKAVESVGGQLLITADHGNAEQMRDPSTGQAHTAHTNLPVPLIYVGEKSLKAVEGGKLSDIAPTMLTLMGMEIPKEMTGKPLFIVE.

Mn(2+)-binding residues include Asp14 and Ser64. The Phosphoserine intermediate role is filled by Ser64. Residues His125, 155–156, Arg187, Arg193, 263–266, and Lys336 contribute to the substrate site; these read RD and RADR. Residues Asp403, His407, Asp444, His445, and His463 each contribute to the Mn(2+) site.

Belongs to the BPG-independent phosphoglycerate mutase family. As to quaternary structure, monomer. The cofactor is Mn(2+).

The catalysed reaction is (2R)-2-phosphoglycerate = (2R)-3-phosphoglycerate. It functions in the pathway carbohydrate degradation; glycolysis; pyruvate from D-glyceraldehyde 3-phosphate: step 3/5. Functionally, catalyzes the interconversion of 2-phosphoglycerate and 3-phosphoglycerate. The chain is 2,3-bisphosphoglycerate-independent phosphoglycerate mutase from Enterobacter sp. (strain 638).